A 155-amino-acid polypeptide reads, in one-letter code: Small ribosomal subunit protein uS7cz/uS7cy (155 aa).

This sequence belongs to the universal ribosomal protein uS7 family. In terms of assembly, part of the 30S ribosomal subunit.

The protein resides in the plastid. The protein localises to the chloroplast. Its function is as follows. One of the primary rRNA binding proteins, it binds directly to 16S rRNA where it nucleates assembly of the head domain of the 30S subunit. This is Small ribosomal subunit protein uS7cz/uS7cy (rps7-A) from Citrus sinensis (Sweet orange).